Reading from the N-terminus, the 212-residue chain is Peptide methionine sulfoxide reductase MsrA (212 aa).

Cys-52 is a catalytic residue.

The protein belongs to the MsrA Met sulfoxide reductase family.

The catalysed reaction is L-methionyl-[protein] + [thioredoxin]-disulfide + H2O = L-methionyl-(S)-S-oxide-[protein] + [thioredoxin]-dithiol. It carries out the reaction [thioredoxin]-disulfide + L-methionine + H2O = L-methionine (S)-S-oxide + [thioredoxin]-dithiol. In terms of biological role, has an important function as a repair enzyme for proteins that have been inactivated by oxidation. Catalyzes the reversible oxidation-reduction of methionine sulfoxide in proteins to methionine. In Salmonella paratyphi B (strain ATCC BAA-1250 / SPB7), this protein is Peptide methionine sulfoxide reductase MsrA.